The sequence spans 186 residues: Probable peptidyl-tRNA hydrolase 2 (186 aa).

Belongs to the PTH2 family.

The enzyme catalyses an N-acyl-L-alpha-aminoacyl-tRNA + H2O = an N-acyl-L-amino acid + a tRNA + H(+). Its function is as follows. The natural substrate for this enzyme may be peptidyl-tRNAs which drop off the ribosome during protein synthesis. The polypeptide is Probable peptidyl-tRNA hydrolase 2 (Drosophila melanogaster (Fruit fly)).